The primary structure comprises 366 residues: Polyamine aminopropyltransferase 2 (366 aa).

Positions 20-58 (KDKRSELDSDKFELEQQDKHDIQDKQDKQDEQNKQDKQV) are enriched in basic and acidic residues. The segment at 20-61 (KDKRSELDSDKFELEQQDKHDIQDKQDKQDEQNKQDKQVQSE) is disordered. Residues 74 to 305 (DVWDEISLKE…TDWGFHLATN (232 aa)) enclose the PABS domain. Gln-100 lines the S-methyl-5'-thioadenosine pocket. Residues His-129 and Asp-153 each coordinate spermidine. Residues Asp-173 and 207–208 (DA) contribute to the S-methyl-5'-thioadenosine site. The Proton acceptor role is filled by Asp-225.

The protein belongs to the spermidine/spermine synthase family. As to quaternary structure, homodimer or homotetramer.

It localises to the cytoplasm. It catalyses the reaction S-adenosyl 3-(methylsulfanyl)propylamine + putrescine = S-methyl-5'-thioadenosine + spermidine + H(+). Its pathway is amine and polyamine biosynthesis; spermidine biosynthesis; spermidine from putrescine: step 1/1. Functionally, catalyzes the irreversible transfer of a propylamine group from the amino donor S-adenosylmethioninamine (decarboxy-AdoMet) to putrescine (1,4-diaminobutane) to yield spermidine. The polypeptide is Polyamine aminopropyltransferase 2 (Bacillus cereus (strain ATCC 14579 / DSM 31 / CCUG 7414 / JCM 2152 / NBRC 15305 / NCIMB 9373 / NCTC 2599 / NRRL B-3711)).